Here is a 66-residue protein sequence, read N- to C-terminus: Toxin BeM14 (66 aa).

An LCN-type CS-alpha/beta domain is found at 2–66 (RDAYIADDRN…IRKIPGEECR (65 aa)). Intrachain disulfides connect Cys12–Cys65, Cys16–Cys36, Cys22–Cys46, and Cys26–Cys48.

The protein belongs to the long (4 C-C) scorpion toxin superfamily. Sodium channel inhibitor family. Alpha subfamily. In terms of tissue distribution, expressed by the venom gland.

It is found in the secreted. Its function is as follows. Alpha toxins bind voltage-independently at site-3 of sodium channels (Nav) and inhibit the inactivation of the activated channels, thereby blocking neuronal transmission. Has paralytic activity in mice. This is Toxin BeM14 from Mesobuthus eupeus (Lesser Asian scorpion).